The following is a 274-amino-acid chain: Large ribosomal subunit protein uL2 (274 aa).

2 disordered regions span residues 28 to 53 (KPYA…TVRH) and 223 to 274 (VAMN…RRTK). The segment covering 39–48 (KSGGRNNNGR) has biased composition (low complexity). Basic residues predominate over residues 254–274 (KGAKTRKNKRTDKFIVRRRTK).

The protein belongs to the universal ribosomal protein uL2 family. In terms of assembly, part of the 50S ribosomal subunit. Forms a bridge to the 30S subunit in the 70S ribosome.

Functionally, one of the primary rRNA binding proteins. Required for association of the 30S and 50S subunits to form the 70S ribosome, for tRNA binding and peptide bond formation. It has been suggested to have peptidyltransferase activity; this is somewhat controversial. Makes several contacts with the 16S rRNA in the 70S ribosome. In Pseudoalteromonas translucida (strain TAC 125), this protein is Large ribosomal subunit protein uL2.